Consider the following 1134-residue polypeptide: Translation initiation factor IF-2 (1134 aa).

Disordered regions lie at residues 55 to 465 (AQKS…HIIG) and 491 to 524 (LARP…QRQR). Composition is skewed to polar residues over residues 56–65 (QKSSNSSSPP), 83–105 (SPPT…SSLK), 137–147 (PSISKNNSLKV), 208–234 (QIKQ…IQTN), and 251–264 (VQSQ…NNNL). Basic and acidic residues-rich tracts occupy residues 391-403 (KRGD…KKDG) and 438-450 (PDWD…EALR). Composition is skewed to basic residues over residues 495 to 504 (GKPKASKKSG) and 511 to 524 (LRKR…QRQR). Positions 626-798 (RRPPVVTVMG…ILLVTEVEDL (173 aa)) constitute a tr-type G domain. The G1 stretch occupies residues 635–642 (GHVDHGKT). 635–642 (GHVDHGKT) contributes to the GTP binding site. Residues 660 to 664 (GITQH) are G2. Positions 685–688 (DTPG) are G3. Residues 685 to 689 (DTPGH) and 739 to 742 (NKID) contribute to the GTP site. The G4 stretch occupies residues 739–742 (NKID). Residues 775-777 (SAI) form a G5 region.

This sequence belongs to the TRAFAC class translation factor GTPase superfamily. Classic translation factor GTPase family. IF-2 subfamily.

Its subcellular location is the cytoplasm. Its function is as follows. One of the essential components for the initiation of protein synthesis. Protects formylmethionyl-tRNA from spontaneous hydrolysis and promotes its binding to the 30S ribosomal subunits. Also involved in the hydrolysis of GTP during the formation of the 70S ribosomal complex. In Prochlorococcus marinus (strain SARG / CCMP1375 / SS120), this protein is Translation initiation factor IF-2.